The following is a 503-amino-acid chain: Probable cytosol aminopeptidase (503 aa).

Residues Lys-270 and Asp-275 each contribute to the Mn(2+) site. Lys-282 is a catalytic residue. Mn(2+)-binding residues include Asp-293, Asp-352, and Glu-354. Residue Arg-356 is part of the active site.

This sequence belongs to the peptidase M17 family. It depends on Mn(2+) as a cofactor.

It localises to the cytoplasm. It catalyses the reaction Release of an N-terminal amino acid, Xaa-|-Yaa-, in which Xaa is preferably Leu, but may be other amino acids including Pro although not Arg or Lys, and Yaa may be Pro. Amino acid amides and methyl esters are also readily hydrolyzed, but rates on arylamides are exceedingly low.. The catalysed reaction is Release of an N-terminal amino acid, preferentially leucine, but not glutamic or aspartic acids.. In terms of biological role, presumably involved in the processing and regular turnover of intracellular proteins. Catalyzes the removal of unsubstituted N-terminal amino acids from various peptides. The sequence is that of Probable cytosol aminopeptidase from Salmonella arizonae (strain ATCC BAA-731 / CDC346-86 / RSK2980).